The following is a 178-amino-acid chain: FXYD domain-containing ion transport regulator 5 (178 aa).

The N-terminal stretch at 1-21 (MSLSSRLCLLTIVALILPSRG) is a signal peptide. The segment covering 21 to 59 (GQTPKKPTSIFTADQTSATTRDNVPDPDQTSPGVQTTPL) has biased composition (polar residues). Residues 21–130 (GQTPKKPTSI…SYIEHPLDSN (110 aa)) are disordered. Over 22–145 (QTPKKPTSIF…YYDDTTLRKR (124 aa)) the chain is Extracellular. Positions 67-79 (TGSQTAAQTETQQ) are enriched in low complexity. Polar residues predominate over residues 80–100 (LTKMATSNPVSDPGPHTSSKK). The helical transmembrane segment at 146–166 (GLLVAAVLFITGIIILTSGKC) threads the bilayer. Topologically, residues 167 to 178 (RQLSQFCLNRHR) are cytoplasmic.

This sequence belongs to the FXYD family. Regulatory subunit of the sodium/potassium-transporting ATPase which is composed of a catalytic alpha subunit, a non-catalytic beta subunit and an additional regulatory subunit. The regulatory subunit, a member of the FXYD protein family, modulates the enzymatic activity in a tissue- and isoform-specific way by changing affinities of the Na+/K+-ATPase toward Na(+), K(+) or ATP. Post-translationally, glycosylated. In terms of tissue distribution, expressed mainly in epithelial tissue, such as lung, intestine and kidney. Not detected in brain, liver, muscle, and heart.

Its subcellular location is the cell membrane. It localises to the basolateral cell membrane. Functionally, associates with and regulates the activity of the sodium/potassium-transporting ATPase (NKA) which catalyzes the hydrolysis of ATP coupled with the exchange of Na(+) and K(+) ions across the plasma membrane. May increase NKA activity by increasing the apparent affinity for Na(+). Involved in down-regulation of E-cadherin which results in reduced cell adhesion. Promotes metastasis. In Mus musculus (Mouse), this protein is FXYD domain-containing ion transport regulator 5 (Fxyd5).